A 65-amino-acid chain; its full sequence is Sodium channel neurotoxin MeuNaTxalpha-9 (65 aa).

An LCN-type CS-alpha/beta domain is found at 2 to 64; it reads RDGYIANDRN…VPIRIPGECR (63 aa). 4 disulfide bridges follow: C12–C63, C16–C36, C22–C46, and C26–C48. At R64 the chain carries Arginine amide.

The protein belongs to the long (4 C-C) scorpion toxin superfamily. Sodium channel inhibitor family. Alpha subfamily. Expressed by the venom gland.

The protein localises to the secreted. In terms of biological role, alpha toxins bind voltage-independently at site-3 of sodium channels (Nav) and inhibit the inactivation of the activated channels, thereby blocking neuronal transmission. This Mesobuthus eupeus (Lesser Asian scorpion) protein is Sodium channel neurotoxin MeuNaTxalpha-9.